The following is a 468-amino-acid chain: Protein wingless (468 aa).

An N-terminal signal peptide occupies residues 1-17 (MDISYIFVICLMALCSG). The segment at 83-106 (VKGANLAISECQHQFRNRRWNCST) is binds porcupine. Residues Cys-93 and Cys-104 are joined by a disulfide bond. 2 N-linked (GlcNAc...) asparagine glycosylation sites follow: Asn-103 and Asn-108. 4 disulfides stabilise this stretch: Cys-146-Cys-154, Cys-156-Cys-185, Cys-233-Cys-247, and Cys-235-Cys-242. A lipid anchor (O-palmitoleoyl serine; by PORCN) is attached at Ser-239. The disordered stretch occupies residues 333–362 (ISKIHHPNMPSPNSLPQAGQRGGRNGRRQG). 6 disulfide bridges follow: Cys-397/Cys-428, Cys-413/Cys-423, Cys-427/Cys-467, Cys-443/Cys-458, Cys-445/Cys-455, and Cys-450/Cys-451. Asn-414 carries N-linked (GlcNAc...) asparagine glycosylation.

Belongs to the Wnt family. Monomer; folds by intramolecular disulfide bonds. Interacts with porcupine (por). Interacts with wls; in the Golgi. Interacts with en. Interacts with the proteoglycan Cow (heparan sulfate-bound form); this stabilizes wg and promotes its extracellular distribution. Interacts with peg; the interaction facilitates short-range diffusion of wg. In terms of processing, palmitoleoylated by porcupine. The lipid group functions as a sorting signal, targeting the ligand to polarized vesicles that transport wg to unique sites at the cell surface. Depalmitoleoylated by notum, leading to inhibit Wnt signaling pathway. Major form is glycosylated at 2 sites, glycosylation is stimulated by porcupine at the ER. As to expression, segmented expression in embryos. In embryonic tracheal cells, expression is in stripes flanking the tracheal placode.

It localises to the secreted. The protein localises to the synapse. Its subcellular location is the membrane. The protein resides in the extracellular space. It is found in the extracellular matrix. Functionally, binds as a ligand to a family of frizzled seven-transmembrane receptors and acts through a cascade of genes on the nucleus. Segment polarity protein. May be a growth factor. Acts on neighboring cells to regulate at least one gene, the homeobox segmentation gene engrailed. Wg signal represses arm phosphorylation. Wg signaling operates by inactivating the sgg repression of engrailed autoactivation. Wg and Wnt2 have a role in the developing trachea and together are responsible for all dorsal trunk formation. Wg also acts in the developing epidermis. Acts as a morphogen, and diffuses long distances despite its lipidation. Lipophorin is required for diffusion, probably by acting as vehicle for its movement, explaining how it can spread over long distances despite its lipidation. In non-neuronal cells, wls directs wg secretion via clathrin-mediated endocytosis and the retromer complex (a conserved protein complex consisting of Vps26 and Vps35) to sustain a wls traffic loop encompassing the Golgi, the cell surface, an endocytic compartment and a retrograde route leading back to the Golgi. In neuronal cells (the larval motorneuron NMJ), wg signal moves across the synapse through the release of wls-containing exosome-like vesicles. In Drosophila melanogaster (Fruit fly), this protein is Protein wingless (wg).